We begin with the raw amino-acid sequence, 511 residues long: Apolipoprotein N-acyltransferase (511 aa).

Transmembrane regions (helical) follow at residues 7–25, 58–78, 90–110, 125–145, 163–183, and 192–212; these read PGWP…TPLA, GWWY…VSIH, FLML…AWLW, LAFA…LTGF, VPVG…ALLV, and GASL…GLYL. The CN hydrolase domain occupies 230-470; sequence IQGNIAQELK…QGILRGEVIP (241 aa). Catalysis depends on Glu-269, which acts as the Proton acceptor. Lys-330 is an active-site residue. The active-site Nucleophile is the Cys-382. Residues 478 to 498 form a helical membrane-spanning segment; sequence LQYRVWPLAGLAGVLLLWALL.

This sequence belongs to the CN hydrolase family. Apolipoprotein N-acyltransferase subfamily.

It is found in the cell inner membrane. The catalysed reaction is N-terminal S-1,2-diacyl-sn-glyceryl-L-cysteinyl-[lipoprotein] + a glycerophospholipid = N-acyl-S-1,2-diacyl-sn-glyceryl-L-cysteinyl-[lipoprotein] + a 2-acyl-sn-glycero-3-phospholipid + H(+). It participates in protein modification; lipoprotein biosynthesis (N-acyl transfer). In terms of biological role, catalyzes the phospholipid dependent N-acylation of the N-terminal cysteine of apolipoprotein, the last step in lipoprotein maturation. This is Apolipoprotein N-acyltransferase from Pseudomonas paraeruginosa (strain DSM 24068 / PA7) (Pseudomonas aeruginosa (strain PA7)).